The chain runs to 285 residues: Formate channel FocA (285 aa).

Over 1 to 30 (MKADNPFDLLLPAAMAKVAEEAGVYKATKH) the chain is Cytoplasmic. The helical transmembrane segment at 31–56 (PLKTFYLAITAGVFISIAFVFYITAT) threads the bilayer. Residues 57 to 64 (TGTGTMPF) are Periplasmic-facing. Residues 65-85 (GMAKLVGGICFSLGLILCVVC) traverse the membrane as a helical segment. Over 86 to 112 (GADLFTSTVLIVVAKASGRITWGQLAK) the chain is Cytoplasmic. Residues 113–135 (NWLNVYFGNLVGALLFVLLMWLS) traverse the membrane as a helical segment. Residues 136–160 (GEYMTANGQWGLNVLQTADHKVHHT) are Periplasmic-facing. A helical transmembrane segment spans residues 161 to 181 (FIEAVCLGILANLMVCLAVWM). At 182-187 (SYSGRS) the chain is on the cytoplasmic side. Residues 188–205 (LMDKAFIMVLPVAMFVAS) form a helical membrane-spanning segment. The Periplasmic portion of the chain corresponds to 206–249 (GFEHSIANMFMIPMGIVIRDFASPEFWTAVGSAPENFSHLTVMN). The chain crosses the membrane as a helical span at residues 250-276 (FITDNLIPVTIGNIIGGGLLVGLTYWV). Topologically, residues 277–285 (IYLRENDHH) are cytoplasmic.

The protein belongs to the FNT transporter (TC 1.A.16) family. As to quaternary structure, homopentamer.

It localises to the cell inner membrane. The enzyme catalyses formate(in) = formate(out). Functionally, involved in the bidirectional transport of formate during mixed-acid fermentation. Functions to maintain relatively constant intracellular formate levels during growth, using different mechanisms for efflux and uptake of the anion. Is impermeable to water. This Escherichia coli O157:H7 protein is Formate channel FocA.